Here is a 406-residue protein sequence, read N- to C-terminus: Tryptophan synthase beta chain (406 aa).

The residue at position 99 (Lys99) is an N6-(pyridoxal phosphate)lysine.

The protein belongs to the TrpB family. As to quaternary structure, tetramer of two alpha and two beta chains. It depends on pyridoxal 5'-phosphate as a cofactor.

The catalysed reaction is (1S,2R)-1-C-(indol-3-yl)glycerol 3-phosphate + L-serine = D-glyceraldehyde 3-phosphate + L-tryptophan + H2O. It functions in the pathway amino-acid biosynthesis; L-tryptophan biosynthesis; L-tryptophan from chorismate: step 5/5. The beta subunit is responsible for the synthesis of L-tryptophan from indole and L-serine. The chain is Tryptophan synthase beta chain from Rhizobium johnstonii (strain DSM 114642 / LMG 32736 / 3841) (Rhizobium leguminosarum bv. viciae).